Here is a 162-residue protein sequence, read N- to C-terminus: ATP synthase subunit b (162 aa).

A helical transmembrane segment spans residues 6–26; that stretch reads PDIGLLFWMLLSFGIVFFVAA.

Belongs to the ATPase B chain family. F-type ATPases have 2 components, F(1) - the catalytic core - and F(0) - the membrane proton channel. F(1) has five subunits: alpha(3), beta(3), gamma(1), delta(1), epsilon(1). F(0) has three main subunits: a(1), b(2) and c(10-14). The alpha and beta chains form an alternating ring which encloses part of the gamma chain. F(1) is attached to F(0) by a central stalk formed by the gamma and epsilon chains, while a peripheral stalk is formed by the delta and b chains.

It localises to the cell inner membrane. Functionally, f(1)F(0) ATP synthase produces ATP from ADP in the presence of a proton or sodium gradient. F-type ATPases consist of two structural domains, F(1) containing the extramembraneous catalytic core and F(0) containing the membrane proton channel, linked together by a central stalk and a peripheral stalk. During catalysis, ATP synthesis in the catalytic domain of F(1) is coupled via a rotary mechanism of the central stalk subunits to proton translocation. Its function is as follows. Component of the F(0) channel, it forms part of the peripheral stalk, linking F(1) to F(0). The protein is ATP synthase subunit b of Azobacteroides pseudotrichonymphae genomovar. CFP2.